The chain runs to 406 residues: Cysteine desulfurase (406 aa).

K226 is modified (N6-(pyridoxal phosphate)lysine). The active-site Cysteine persulfide intermediate is C364.

It belongs to the class-V pyridoxal-phosphate-dependent aminotransferase family. Csd subfamily. As to quaternary structure, homodimer. Interacts with SufE and the SufBCD complex composed of SufB, SufC and SufD. The interaction with SufE is required to mediate the direct transfer of the sulfur atom from the S-sulfanylcysteine. It depends on pyridoxal 5'-phosphate as a cofactor.

It is found in the cytoplasm. It carries out the reaction (sulfur carrier)-H + L-cysteine = (sulfur carrier)-SH + L-alanine. The enzyme catalyses L-selenocysteine + AH2 = hydrogenselenide + L-alanine + A + H(+). Its pathway is cofactor biosynthesis; iron-sulfur cluster biosynthesis. Its function is as follows. Cysteine desulfurases mobilize the sulfur from L-cysteine to yield L-alanine, an essential step in sulfur metabolism for biosynthesis of a variety of sulfur-containing biomolecules. Component of the suf operon, which is activated and required under specific conditions such as oxidative stress and iron limitation. Acts as a potent selenocysteine lyase in vitro, that mobilizes selenium from L-selenocysteine. Selenocysteine lyase activity is however unsure in vivo. The polypeptide is Cysteine desulfurase (Salmonella gallinarum (strain 287/91 / NCTC 13346)).